The following is a 374-amino-acid chain: Alginate lyase (374 aa).

The first 26 residues, 1–26, serve as a signal peptide directing secretion; the sequence is MRNPKLKNLLAPTLLSLAMFAGATQA. Substrate-binding positions include 67-68, 140-141, and Tyr-258; these read SK and HT.

The protein belongs to the polysaccharide lyase 5 family.

It localises to the periplasm. The catalysed reaction is Eliminative cleavage of alginate to give oligosaccharides with 4-deoxy-alpha-L-erythro-hex-4-enuronosyl groups at their non-reducing ends and beta-D-mannuronate at their reducing end.. Its function is as follows. Catalyzes the depolymerization of alginate by cleaving the beta-1,4 glycosidic bond between two adjacent sugar residues via a beta-elimination mechanism. May serve to degrade mislocalized alginate that is trapped in the periplasmic space. The protein is Alginate lyase of Cobetia marina (Deleya marina).